Consider the following 907-residue polypeptide: Phosphoenolpyruvate carboxylase (907 aa).

Active-site residues include H138 and K570.

It belongs to the PEPCase type 1 family. Mg(2+) serves as cofactor.

The catalysed reaction is oxaloacetate + phosphate = phosphoenolpyruvate + hydrogencarbonate. Forms oxaloacetate, a four-carbon dicarboxylic acid source for the tricarboxylic acid cycle. This is Phosphoenolpyruvate carboxylase from Streptococcus mutans serotype c (strain ATCC 700610 / UA159).